Reading from the N-terminus, the 525-residue chain is MANNITLTGLLKKAAAEFSDRRAILVSGEFHLTHARLQEIVDHAASLLLASGVGHGDVVALTFPNTIEYIVMFLAVIRCRAVAAPLNSAYTAEEFEFYLSDSESKLLITPPKGIEAARAAASKLNITHVTATLPGGDGLIALSPSPNNESSLDAVAELTNDPSDVSLFLHTSGTTSRPKGVPLTQLNLASSVQNIKSVYKLSESDSTVVVLPLFHVHGMIAGLLSSLIAGSAVTLPAAGRFSASTFWSDMIACNATWYTAVPTIHQIILDRHLNKPEPTYPKLRFIRSCSASLAPTIMGRLEESFGAPVLEAYAMTEAAHLMASNPLPEDGGHKPGSVGKPVGQEMAILDLNGSAQLPGFSGEVCIRGPNVTKGYKNNPEANKAAFQFGWFHTGDVGYFDEDGYLHLVGRIKELINRGGEKISPIEVDAVLLSHPDLAQAVAFGVPDDKYGEEINCAVIPREGSEVDEDGVLRFCKKNLAAFKVPKKVFITDSLPKTATGKIQRRIVAEHFLAQISTAKVPKFGA.

Residues 171 to 179, 311 to 316, aspartate 395, 407 to 410, and lysine 501 contribute to the ATP site; these read TSGTTSRPK, EAYAMT, and LVGR. The interval 242–311 is SBD1; the sequence is SASTFWSDMI…EESFGAPVLE (70 aa). An SBD2 region spans residues 312-375; sequence AYAMTEAAHL…IRGPNVTKGY (64 aa).

The protein belongs to the ATP-dependent AMP-binding enzyme family.

It localises to the cytoplasm. It is found in the cytosol. The polypeptide is Probable CoA ligase CCL9 (Humulus lupulus (European hop)).